The sequence spans 774 residues: Protein translocase subunit SecA 2 (774 aa).

ATP is bound by residues Gln-94, 112–116 (GEGKT), and Asp-501.

It belongs to the SecA family. As to quaternary structure, monomer and homodimer. Part of the essential Sec protein translocation apparatus which comprises SecA, SecYEG and auxiliary proteins SecDF. Other proteins may also be involved.

The protein resides in the cell membrane. Its subcellular location is the cytoplasm. The enzyme catalyses ATP + H2O + cellular proteinSide 1 = ADP + phosphate + cellular proteinSide 2.. Its function is as follows. Part of the Sec protein translocase complex. Interacts with the SecYEG preprotein conducting channel. Has a central role in coupling the hydrolysis of ATP to the transfer of proteins into and across the cell membrane, serving as an ATP-driven molecular motor driving the stepwise translocation of polypeptide chains across the membrane. The protein is Protein translocase subunit SecA 2 of Mycobacterium sp. (strain JLS).